The primary structure comprises 914 residues: Probable UDP-N-acetylglucosamine--peptide N-acetylglucosaminyltransferase SPINDLY (914 aa).

The segment at 1–39 (MVGLEDDTERERSPVVENGFSNGSRSSSSSAGVLSPSRK) is disordered. Positions 19–37 (GFSNGSRSSSSSAGVLSPS) are enriched in low complexity. Serine 35 carries the post-translational modification Phosphoserine. TPR repeat units lie at residues 43-76 (GNDT…DSKN), 77-110 (VEAH…DPHN), 112-144 (CALT…DASY), 152-185 (AIVL…DPHY), 186-219 (APAY…RPMY), 220-253 (AEAY…SPNF), 261-294 (AIAL…NWHY), 295-328 (ADAM…NPHC), 329-362 (AEAC…KPNF), 364-396 (QSLN…NPTY), and 397-430 (AEAF…DPDS). Residues 431 to 914 (RNAGQNRLLA…QLSKRMDSTS (484 aa)) form a catalytic region region. The interval 866–914 (PLISKDLGPSRVSVTGEATPSLKANGSAPVPSSLPTQSPQLSKRMDSTS) is disordered. The segment covering 877–889 (VSVTGEATPSLKA) has biased composition (polar residues). The span at 894–907 (PVPSSLPTQSPQLS) shows a compositional bias: low complexity.

The protein belongs to the glycosyltransferase 41 family. O-GlcNAc transferase subfamily. In terms of assembly, homomultimer; via its TPR repeats. Interacts with GI. Interacts with TCP14 and TCP15. Interacts (via N-terminus) with APRR5. Interacts with CPN20. Widely expressed. Present throughout the plant (at protein level).

The protein resides in the cytoplasm. It is found in the nucleus. The enzyme catalyses L-seryl-[protein] + UDP-N-acetyl-alpha-D-glucosamine = 3-O-(N-acetyl-beta-D-glucosaminyl)-L-seryl-[protein] + UDP + H(+). It catalyses the reaction L-threonyl-[protein] + UDP-N-acetyl-alpha-D-glucosamine = 3-O-(N-acetyl-beta-D-glucosaminyl)-L-threonyl-[protein] + UDP + H(+). It carries out the reaction L-seryl-[protein] + GDP-beta-L-fucose = 3-O-(alpha-L-fucosyl)-L-seryl-[protein] + GDP + H(+). The catalysed reaction is L-threonyl-[protein] + GDP-beta-L-fucose = 3-O-(alpha-L-fucosyl)-L-threonyl-[protein] + GDP + H(+). It participates in protein modification; protein glycosylation. In terms of biological role, probable O-linked N-acetylglucosamine transferase (OGT) involved in various processes such as gibberellin (GA) signaling pathway and circadian clock. OGTs catalyze the addition of nucleotide-activated sugars directly onto the polypeptide through O-glycosidic linkage with the hydroxyl of serine or threonine. Probably acts by adding O-linked sugars to yet unknown proteins. Acts as a repressor of GA signaling pathway to inhibit hypocotyl elongation. Functions with GIGANTEA (GI) in pathways controlling flowering, circadian cotyledon movements and hypocotyl elongation. Acts as a light-regulated promoter of elongation via its interaction with GI. Acts as an activator of cytokinin signaling. Required with SEC for gamete and seed development. Its OGT activity has been proved in vitro but not in vivo. Possesses O-fucosyltransferase activity on specific serine and threonine residues. Mediates O-fucosylation of the DELLA protein RGA, a repressor of the GA signaling pathway. O-fucosylation enhances RGA activity by promoting RGA binding to key transcription factors in brassinosteroid and light-signaling pathways. Regulates root hair patterning upstream of the transcription factor WER, independently of DELLA proteins and GA signaling. Involved in abscisic acid (ABA) signaling partly through functional ABAR. Mediates O-fucosylation of CPN20 that may depress ABA responses during seed germination and seedling development. Involved in the modulation of the pace of the circadian clock by mediating O-fucosylation of APRR5, one of the core circadian clock components. O-fucosylation promotes APRR5 proteolysis. The polypeptide is Probable UDP-N-acetylglucosamine--peptide N-acetylglucosaminyltransferase SPINDLY (Arabidopsis thaliana (Mouse-ear cress)).